The chain runs to 247 residues: MSQVNMRDMLKAGVHFGHQTRYWNPKMGKYIFGARNKIHIINLEKTLPMFNEALTFVERLASGKNKILFVGTKRSAGKIVAEEAARCGSPYVDHRWLGGMLTNFKTIRQSIKRLRELEVQAEDGTFAKLTKKEALMRTRDLEKLDRSLGGIKDMGGLPDALFVIDVDHERIAITEANKLGIPVIGVVDTNSSPEGVDYIIPGNDDAIRAIQLYMGSMADAVIRGRNNVAGGTDVFVEEAPAAAAVEG.

It belongs to the universal ribosomal protein uS2 family.

The polypeptide is Small ribosomal subunit protein uS2 (Pseudomonas syringae pv. tomato (strain ATCC BAA-871 / DC3000)).